We begin with the raw amino-acid sequence, 65 residues long: Large ribosomal subunit protein bL35 (65 aa).

The disordered stretch occupies residues 1–65; the sequence is MQKIKTNRSA…KELKRLLPGM (65 aa). Composition is skewed to basic residues over residues 10 to 19 and 33 to 47; these read AAKRFKRTKS and LTKK…LRKS. The segment covering 54-65 has biased composition (basic and acidic residues); it reads NNKELKRLLPGM.

Belongs to the bacterial ribosomal protein bL35 family.

In Desulfosudis oleivorans (strain DSM 6200 / JCM 39069 / Hxd3) (Desulfococcus oleovorans), this protein is Large ribosomal subunit protein bL35.